The chain runs to 837 residues: Vacuolar membrane protease (837 aa).

The Cytoplasmic segment spans residues 1–36; it reads MSEEEVHDTSSEASEVFTNQPNAFVRGVRSIFGYRK. Residues 37 to 57 traverse the membrane as a helical segment; sequence TSLTLFVILTIVVTAGLSFYD. The Vacuolar segment spans residues 58–355; the sequence is NSLELTIELP…FATPISALAR (298 aa). N-linked (GlcNAc...) asparagine glycosylation occurs at N143. Residues H157 and D169 each contribute to the Zn(2+) site. E201 acts as the Proton acceptor in catalysis. Zn(2+) contacts are provided by E202, E227, and H299. A helical membrane pass occupies residues 356-376; the sequence is VNLVLLVLFPVVSTPLLFVIV. The Cytoplasmic portion of the chain corresponds to 377-384; it reads KYKKWKLR. The helical transmembrane segment at 385 to 405 threads the bilayer; it reads VTNFLGVPLAMGLAVAVGQVG. Over 406–415 the chain is Vacuolar; it reads NPMLVSSHPM. Residues 416 to 436 traverse the membrane as a helical segment; the sequence is MVVATTTSIVVLVYYVVLNGV. The Cytoplasmic segment spans residues 437–446; that stretch reads DWVNTSSDQK. A helical transmembrane segment spans residues 447–467; the sequence is LVTMIEVSFVYWVVLVYVTWS. Topologically, residues 468–474 are vacuolar; that stretch reads GGDHTGE. Residues 475 to 495 form a helical membrane-spanning segment; it reads FGVTVLFFVQASTSLLGLIGW. The Cytoplasmic portion of the chain corresponds to 496 to 539; sequence TFTRVRGGDEPLLSGEEERYGTEDERDTEKPLVEHNYDWSLQYL. Residues 540-560 traverse the membrane as a helical segment; the sequence is LIVPVSSLVVYNSGWLVLEGV. N561 carries N-linked (GlcNAc...) asparagine glycosylation. The Vacuolar portion of the chain corresponds to 561–572; that stretch reads NKTVQESLASEH. Residues 573 to 593 traverse the membrane as a helical segment; that stretch reads LIYWIVVVFSQFLVLPVVPFI. Topologically, residues 594–598 are cytoplasmic; the sequence is TKFNR. Residues 599–619 form a helical membrane-spanning segment; the sequence is YIVLGLSVVAVVGVLMSMAVH. At 620-837 the chain is on the vacuolar side; it reads PFNQGSPMKL…LVGVVKHVDV (218 aa). N689 carries an N-linked (GlcNAc...) asparagine glycan.

This sequence belongs to the peptidase M28 family. It depends on Zn(2+) as a cofactor.

Its subcellular location is the vacuole membrane. Functionally, may be involved in vacuolar sorting and osmoregulation. This chain is Vacuolar membrane protease, found in Candida albicans (strain WO-1) (Yeast).